The following is a 532-amino-acid chain: Germ cell nuclear acidic-1 protein (532 aa).

A compositionally biased stretch (basic and acidic residues) spans Met-1–Asn-10. Disordered stretches follow at residues Met-1–Ser-50, Arg-84–Glu-181, and Tyr-213–Gln-253. Low complexity predominate over residues Ala-14–Ser-32. Basic and acidic residues-rich tracts occupy residues Ser-39 to Pro-48, Leu-94 to Leu-107, and Lys-124 to Lys-133. The segment covering Tyr-213–Tyr-235 has biased composition (acidic residues). Residues Arg-236 to Arg-251 show a composition bias toward basic and acidic residues. Residues Arg-308–Ser-398 enclose the SprT-like domain. Residues Ala-468–Ile-489 are disordered.

Belongs to the serine-aspartate repeat-containing protein (SDr) family. Interacts with top-2; this interaction allows the resolution of topoisomerase II (top-2) DNA-protein cross-links. As to expression, mainly expressed in germ cells and early embryonic, proliferating cells.

It is found in the chromosome. Its function is as follows. May play a role in DNA-protein cross-links (DPCs) clearance through a SUMO-dependent recruitment to sites of DPCs, ensuring the genomic stability by protecting germ cells and early embryos from various sources of damage. May resolve the topoisomerase II (top-2) DPCs. Limits replication stress and DNA double-strand breaks. This Caenorhabditis elegans protein is Germ cell nuclear acidic-1 protein.